Consider the following 319-residue polypeptide: rRNA adenine N-6-methyltransferase (319 aa).

A disordered region spans residues 1 to 59; that stretch reads MARAPRSPHPARSRETSRAHPPYGTRADRAPGRGRDRDRSPDSPGNTSSRDGGRSPDRA. The span at 26-41 shows a compositional bias: basic and acidic residues; that stretch reads RADRAPGRGRDRDRSP. Asparagine 66, leucine 68, glycine 93, glutamate 114, aspartate 141, and asparagine 157 together coordinate S-adenosyl-L-methionine.

This sequence belongs to the class I-like SAM-binding methyltransferase superfamily. rRNA adenine N(6)-methyltransferase family.

The catalysed reaction is adenosine(2085) in 23S rRNA + 2 S-adenosyl-L-methionine = N(6)-dimethyladenosine(2085) in 23S rRNA + 2 S-adenosyl-L-homocysteine + 2 H(+). This protein produces a dimethylation of the adenine residue at position 2085 in 23S rRNA, resulting in reduced affinity between ribosomes and macrolide-lincosamide-streptogramin B antibiotics. The sequence is that of rRNA adenine N-6-methyltransferase (ermSF) from Streptomyces fradiae (Streptomyces roseoflavus).